Reading from the N-terminus, the 231-residue chain is Large ribosomal subunit protein uL1 (231 aa).

The protein belongs to the universal ribosomal protein uL1 family. Part of the 50S ribosomal subunit.

Its function is as follows. Binds directly to 23S rRNA. The L1 stalk is quite mobile in the ribosome, and is involved in E site tRNA release. Functionally, protein L1 is also a translational repressor protein, it controls the translation of the L11 operon by binding to its mRNA. This Thiobacillus denitrificans (strain ATCC 25259 / T1) protein is Large ribosomal subunit protein uL1.